We begin with the raw amino-acid sequence, 648 residues long: Threonine--tRNA ligase (648 aa).

Positions 1–61 (MIKITFPNTS…NENASVKLYK (61 aa)) constitute a TGS domain. The segment at 243–542 (DHRRIGKEME…MIEHTGGKFP (300 aa)) is catalytic. The Zn(2+) site is built by Cys-338, His-389, and His-519.

This sequence belongs to the class-II aminoacyl-tRNA synthetase family. In terms of assembly, homodimer. It depends on Zn(2+) as a cofactor.

It localises to the cytoplasm. The enzyme catalyses tRNA(Thr) + L-threonine + ATP = L-threonyl-tRNA(Thr) + AMP + diphosphate + H(+). Functionally, catalyzes the attachment of threonine to tRNA(Thr) in a two-step reaction: L-threonine is first activated by ATP to form Thr-AMP and then transferred to the acceptor end of tRNA(Thr). Also edits incorrectly charged L-seryl-tRNA(Thr). This chain is Threonine--tRNA ligase, found in Azobacteroides pseudotrichonymphae genomovar. CFP2.